We begin with the raw amino-acid sequence, 43 residues long: Potassium channel toxin gamma-KTx 4.2 (43 aa).

4 cysteine pairs are disulfide-bonded: cysteine 5–cysteine 23, cysteine 11–cysteine 34, cysteine 20–cysteine 39, and cysteine 24–cysteine 41.

It belongs to the ergtoxin family. Gamma-KTx 4 subfamily. Expressed by the venom gland.

It localises to the secreted. In terms of biological role, reversibly blocks Kv11/ERG potassium channels. The sequence is that of Potassium channel toxin gamma-KTx 4.2 from Centruroides noxius (Mexican scorpion).